A 315-amino-acid chain; its full sequence is 10-epi-cubebol synthase (315 aa).

Positions 79, 220, 224, and 228 each coordinate Mg(2+). Residues 79–83 carry the DDXXD motif motif; sequence DDVCE. The NXXXSXXXE motif motif lies at 220–228; it reads NDIYSLRKE.

Belongs to the terpene synthase family. The cofactor is Mg(2+).

It catalyses the reaction (2E,6E)-farnesyl diphosphate + H2O = 10-epi-cubebol + diphosphate. Its function is as follows. Catalyzes the cyclization of farnesyl diphosphate (FPP) to 10-epi-cubebol. Is also responsible for the formation of many other sesquiterpenes, mainly cadalanes and cubebanes, including 1,10-di-epi-cubebol and the cadalanes delta-cadinene, T-cadinol and alpha-cadinol. In Sorangium cellulosum (strain So ce56) (Polyangium cellulosum (strain So ce56)), this protein is 10-epi-cubebol synthase.